Reading from the N-terminus, the 265-residue chain is NADH dehydrogenase [ubiquinone] iron-sulfur protein 3, mitochondrial (265 aa).

The N-terminal 33 residues, 1–33 (MAALIRNLGARAAVAALSAKHVVPAAGSTALRM), are a transit peptide targeting the mitochondrion.

It belongs to the complex I 30 kDa subunit family. As to quaternary structure, part of the mitochondrial membrane respiratory chain NADH dehydrogenase (Complex I). Interacts with sicily; interaction is stronger with unprocessed sicily protein.

Its subcellular location is the mitochondrion. The catalysed reaction is a ubiquinone + NADH + 5 H(+)(in) = a ubiquinol + NAD(+) + 4 H(+)(out). Core subunit of the mitochondrial membrane respiratory chain NADH dehydrogenase (Complex I) that is believed to belong to the minimal assembly required for catalysis. Complex I functions in the transfer of electrons from NADH to the respiratory chain. The immediate electron acceptor for the enzyme is believed to be ubiquinone. This is NADH dehydrogenase [ubiquinone] iron-sulfur protein 3, mitochondrial from Drosophila melanogaster (Fruit fly).